A 172-amino-acid chain; its full sequence is MPLLDSFTVDHTRMNAPAVRVAKTMQTPKGDTITVFDLRFTMPNKDILSERGIHTLEHLYAGFMRNHLNGSQVEIIDISPMGCRTGFYMSLIGAPTEQQVAQAWLAAMQDVLKVESQEQIPELNEYQCGTAAMHSLEEAKAIAKNVIAAGISVNRNDELALPESMLNELKVH.

H54, H58, and C128 together coordinate Fe cation.

This sequence belongs to the LuxS family. As to quaternary structure, homodimer. Fe cation serves as cofactor.

It catalyses the reaction S-(5-deoxy-D-ribos-5-yl)-L-homocysteine = (S)-4,5-dihydroxypentane-2,3-dione + L-homocysteine. Its function is as follows. Involved in the synthesis of autoinducer 2 (AI-2) which is secreted by bacteria and is used to communicate both the cell density and the metabolic potential of the environment. The regulation of gene expression in response to changes in cell density is called quorum sensing. Catalyzes the transformation of S-ribosylhomocysteine (RHC) to homocysteine (HC) and 4,5-dihydroxy-2,3-pentadione (DPD). The protein is S-ribosylhomocysteine lyase of Vibrio cholerae serotype O1 (strain ATCC 39541 / Classical Ogawa 395 / O395).